Here is a 384-residue protein sequence, read N- to C-terminus: GDP/UDP-N,N'-diacetylbacillosamine 2-epimerase (hydrolyzing) (384 aa).

The protein belongs to the UDP-N-acetylglucosamine 2-epimerase family.

It catalyses the reaction GDP-N,N'-diacetylbacillosamine + H2O = 2,4-diacetamido-2,4,6-trideoxy-alpha-D-mannopyranose + GDP + H(+). The enzyme catalyses UDP-N,N'-diacetylbacillosamine + H2O = 2,4-diacetamido-2,4,6-trideoxy-alpha-D-mannopyranose + UDP + H(+). Involved in biosynthesis of legionaminic acid (5,7-diamino-3,5,7,9-tetradeoxy-D-glycero-D-galacto-non-2-ulosonic acid)(Leg), a sialic acid-like derivative that is incorporated into flagellin via O-linkage to Ser/Thr. Catalyzes the conversion of GDP-N,N'-diacetylbacillosamine (Bac2Ac4Ac) into 2,4-diacetamido-2,4,6-trideoxymannose and GDP. It can also use UDP-N,N'-diacetylbacillosamine however it generates small quantities of 2,4-diacetamido-2,4,6-trideoxymannose. This chain is GDP/UDP-N,N'-diacetylbacillosamine 2-epimerase (hydrolyzing) (legG), found in Campylobacter jejuni subsp. jejuni serotype O:2 (strain ATCC 700819 / NCTC 11168).